The sequence spans 1239 residues: Anion exchange protein 2 (1239 aa).

Positions 1-237 (MSSAPRRPAK…HRSYNLQERR (237 aa)) are disordered. Residues 1–706 (MSSAPRRPAK…DFRDALDPQC (706 aa)) are Cytoplasmic-facing. 2 stretches are compositionally biased toward basic and acidic residues: residues 37-49 (ELHRTLGVERFEE) and 58-75 (GGEEPGRSYGEEDFEYHR). 2 stretches are compositionally biased toward basic residues: residues 76 to 85 (QSSHHIHHPL) and 94 to 110 (RRRKTPQGPGRKPRRRP). Phosphoserine is present on residues serine 113, serine 132, serine 144, serine 170, and serine 172. Positions 120-133 (TIEEGEEDEDEASE) are enriched in acidic residues. The span at 141-155 (TQPSPVSTPSSVQFF) shows a compositional bias: low complexity. The segment covering 189 to 207 (GAQAGTQVEEAEAVAVASG) has biased composition (low complexity). Gly residues predominate over residues 208–217 (TAGGDDGGAS). Serine 241 carries the phosphoserine modification. Threonine 255 is subject to Phosphothreonine. Lysine 272 is subject to N6-methyllysine. The interval 285–318 (HLVRKNAKGSTQSGREGREPGPTPRARPRAPHKP) is disordered. Position 441 is a phosphoserine (serine 441). The interval 447–468 (SLLGHHHGQGAESDPHVTEPLI) is disordered. Membrane (anion exchange) regions lie at residues 706 to 1239 (CLAA…PMPV) and 708 to 1239 (AAVI…PMPV). The next 4 membrane-spanning stretches (helical) occupy residues 707-727 (LAAVIFIYFAALSPAITFGGL), 752-772 (FCLLGAQPLLVIGFSGPLLVF), 794-814 (IGFWLVLLALLMVALEGSFLV), and 824-844 (IFAFLISLIFIYETFYKLVKI). Topologically, residues 845-895 (FQEHPLHGCSASNSSEVDGGENMTWAVARPTLGPGNRSLAGQSGQGKPRGQ) are extracellular. N-linked (GlcNAc...) asparagine glycans are attached at residues asparagine 857, asparagine 866, and asparagine 880. A helical transmembrane segment spans residues 896–916 (PNTALLSLVLMAGTFFIAFFL). At 917 to 931 (RKFKNSRFFPGRIRR) the chain is on the cytoplasmic side. Transmembrane regions (helical) follow at residues 932–952 (VIGDFGVPIAILIMVLVDYSI), 987–1007 (FPVWMMVASLLPAILVFILIF), 1034–1054 (LLLIVAMGGICALFGLPWLAA), 1088–1108 (RVTGLLVALLVGLSIVIGDLL), and 1111–1131 (IPLAVLFGIFLYMGVTSLNGI). Cysteine 1171 is lipidated: S-palmitoyl cysteine. A helical membrane pass occupies residues 1172 to 1192 (LALLWAVMSTAASLAFPFILI).

Belongs to the anion exchanger (TC 2.A.31) family.

Its subcellular location is the apical cell membrane. It is found in the basolateral cell membrane. It catalyses the reaction hydrogencarbonate(in) + chloride(out) = hydrogencarbonate(out) + chloride(in). Functionally, sodium-independent anion exchanger which mediates the electroneutral exchange of chloride for bicarbonate ions across the cell membrane. Plays an important role in osteoclast differentiation and function. Regulates bone resorption and calpain-dependent actin cytoskeleton organization in osteoclasts via anion exchange-dependent control of pH. Essential for intracellular pH regulation in CD8(+) T-cells upon CD3 stimulation, modulating CD8(+) T-cell response. This is Anion exchange protein 2 (SLC4A2) from Pongo abelii (Sumatran orangutan).